Reading from the N-terminus, the 729-residue chain is Fibroblast growth factor receptor homolog 1 (729 aa).

The signal sequence occupies residues 1–36 (MAAAWSWRASHSTITMTSGSLVVLFLLLSIWQPAVQ). Residues 37-309 (VEGRRQMANS…VASGSLHSTS (273 aa)) lie on the Extracellular side of the membrane. Residues 56-101 (ARSQNKTPAITNNANQSSTSSADLDDGAADDDDNKADLPVNVSSKP) are disordered. A compositionally biased stretch (low complexity) spans 66–77 (TNNANQSSTSSA). The N-linked (GlcNAc...) asparagine glycan is linked to N70. The segment covering 78–89 (DLDDGAADDDDN) has biased composition (acidic residues). Residues N96, N134, N140, N171, N207, N213, N242, N246, and N282 are each glycosylated (N-linked (GlcNAc...) asparagine). Ig-like C2-type domains lie at 106-192 (PKKM…VIVS) and 203-279 (TGPL…NSLG). A disulfide bridge connects residues C125 and C174. Residues C220 and C272 are joined by a disulfide bond. The chain crosses the membrane as a helical span at residues 310-330 (FVYIFVFGGLIFIFMTTLFVF). Residues 331 to 729 (YAIRKMKHEK…TDNLQKWCNY (399 aa)) lie on the Cytoplasmic side of the membrane. Residues 416–692 (LVLGATLGEG…EIVEYMDKLL (277 aa)) enclose the Protein kinase domain. Residues 422 to 430 (LGEGAFGRV) and K443 each bind ATP. Residue D556 is the Proton acceptor of the active site. At Y587 the chain carries Phosphotyrosine; by autocatalysis.

It belongs to the protein kinase superfamily. Tyr protein kinase family. Fibroblast growth factor receptor subfamily. As to expression, in early embryos, expression is specific to mesodermal primordium and invaginated mesodermal cells. At later stages, expression is seen in putative muscle precursor cells and in the CNS.

The protein resides in the membrane. The enzyme catalyses L-tyrosyl-[protein] + ATP = O-phospho-L-tyrosyl-[protein] + ADP + H(+). Its function is as follows. May be required for patterning of muscle precursor cells. May be essential for generation of mesodermal and endodermal layers, invaginations of various types of cells and CNS formation. In Drosophila melanogaster (Fruit fly), this protein is Fibroblast growth factor receptor homolog 1 (htl).